The chain runs to 127 residues: Ribosome-binding factor A (127 aa).

This sequence belongs to the RbfA family. Monomer. Binds 30S ribosomal subunits, but not 50S ribosomal subunits or 70S ribosomes.

Its subcellular location is the cytoplasm. One of several proteins that assist in the late maturation steps of the functional core of the 30S ribosomal subunit. Associates with free 30S ribosomal subunits (but not with 30S subunits that are part of 70S ribosomes or polysomes). Required for efficient processing of 16S rRNA. May interact with the 5'-terminal helix region of 16S rRNA. This is Ribosome-binding factor A from Stenotrophomonas maltophilia (strain K279a).